The following is a 342-amino-acid chain: tRNA dimethylallyltransferase (342 aa).

39-46 (GPTGSGKT) provides a ligand contact to ATP. 41–46 (TGSGKT) contributes to the substrate binding site. Positions 64 to 67 (DSMQ) are interaction with substrate tRNA.

Belongs to the IPP transferase family. As to quaternary structure, monomer. Mg(2+) is required as a cofactor.

The catalysed reaction is adenosine(37) in tRNA + dimethylallyl diphosphate = N(6)-dimethylallyladenosine(37) in tRNA + diphosphate. Its function is as follows. Catalyzes the transfer of a dimethylallyl group onto the adenine at position 37 in tRNAs that read codons beginning with uridine, leading to the formation of N6-(dimethylallyl)adenosine (i(6)A). This is tRNA dimethylallyltransferase from Chlamydia felis (strain Fe/C-56) (Chlamydophila felis).